The primary structure comprises 862 residues: Valine--tRNA ligase (862 aa).

Positions Pro-43–His-53 match the 'HIGH' region motif. Zn(2+) contacts are provided by Cys-176, Cys-179, Cys-344, Cys-347, Cys-417, Cys-420, Cys-438, and Cys-441. The short motif at Lys-528–Ser-532 is the 'KMSKS' region element. Lys-531 lines the ATP pocket. Residues Arg-802–Gly-862 adopt a coiled-coil conformation.

It belongs to the class-I aminoacyl-tRNA synthetase family. ValS type 1 subfamily. In terms of assembly, monomer. Zn(2+) serves as cofactor.

The protein resides in the cytoplasm. It catalyses the reaction tRNA(Val) + L-valine + ATP = L-valyl-tRNA(Val) + AMP + diphosphate. Functionally, catalyzes the attachment of valine to tRNA(Val). As ValRS can inadvertently accommodate and process structurally similar amino acids such as threonine, to avoid such errors, it has a 'posttransfer' editing activity that hydrolyzes mischarged Thr-tRNA(Val) in a tRNA-dependent manner. The protein is Valine--tRNA ligase of Thermus thermophilus (strain ATCC BAA-163 / DSM 7039 / HB27).